The sequence spans 254 residues: Small ribosomal subunit protein uS2 (254 aa).

Positions 228-248 (RKERKGQDAEEELKKASEPKA) are enriched in basic and acidic residues. Residues 228-254 (RKERKGQDAEEELKKASEPKAAEAAAE) form a disordered region.

Belongs to the universal ribosomal protein uS2 family.

This is Small ribosomal subunit protein uS2 from Nitratidesulfovibrio vulgaris (strain ATCC 29579 / DSM 644 / CCUG 34227 / NCIMB 8303 / VKM B-1760 / Hildenborough) (Desulfovibrio vulgaris).